A 230-amino-acid chain; its full sequence is MKLMEVSPLFPCIFLRRVNRFVGLVRIKERIERALITNTGRLNEFMIPGRIGYCTPKAGGKTRYILLGFEDHGKIAIIDTRLQGKAFEKIIEKELLPELEGCRIIKREPRVGESRLDYLLECSKGEIFVETKSAVLREGEYAMYPDCPSVRGQRHIKELIKLARDGKRAMIVFIGALPNVSKFKPYKKGDPKIAELLKEALEAGVEIRALGLHMELSGEIIYRGELGVEI.

This sequence belongs to the SfsA family.

This chain is Sugar fermentation stimulation protein homolog, found in Pyrococcus furiosus (strain ATCC 43587 / DSM 3638 / JCM 8422 / Vc1).